The chain runs to 454 residues: MSLLQFSGLFIVWLLATLFIGTLTWFEFRRVRFNFNVFFSLLFLLTFFFGFPLTSILVFRFNVAVVPAEVLLQALLSAGCFYAVYYVTYKTRLRTARAQAASSGGGLFTMNRVETHLAWMVMMAVALVSVGIFFMHNGFLLFRLHSYSQIFSSEVSGVALKRFFYFFIPAMLVVYFLRQSSRAWLFFLVSTVGFGLLTYMIVGGTRANIIIAFAIFLFIGIIRGWISPGMLAAAGVMGIVGMFWLALKRYGLNVSGDEAFYTFLYLTRDTFSPWENLALLLQHYGDIEFQGLAPIARDFYVFIPSWVWPDRPHIVLNTANYFTWEVLNNHSGLAISPTLLGSLVVMGGVWFIPPGAVVVGLIIKWFDWLYERGNHEPNRYKAAILHSFCFGAIFNMIVLAREGLDAFVSRVIFFMVVFGACLVVAKLIYWLLDSAGLIQPRRRRAAPLSPTETL.

Helical transmembrane passes span 6–26, 37–57, 63–83, 122–142, 157–177, 183–203, 209–229, 230–250, 343–363, 380–400, and 411–431; these read FSGL…LTWF, VFFS…TSIL, VAVV…CFYA, MMAV…FLLF, GVAL…VYFL, AWLF…MIVG, IIIA…ISPG, MLAA…LKRY, LVVM…GLII, YKAA…IVLA, and VIFF…IYWL.

Belongs to the WzyE family. As to quaternary structure, probably part of a complex composed of WzxE, WzyE and WzzE.

The protein resides in the cell inner membrane. The protein operates within bacterial outer membrane biogenesis; enterobacterial common antigen biosynthesis. Functionally, probably involved in the polymerization of enterobacterial common antigen (ECA) trisaccharide repeat units. This chain is Probable ECA polymerase, found in Cronobacter sakazakii (strain ATCC BAA-894) (Enterobacter sakazakii).